The chain runs to 177 residues: Ribulose bisphosphate carboxylase small subunit, chloroplastic 3 (177 aa).

Residues 1 to 56 (MASSMMASTAAAVARAGPAQSSMVPFNACRSSVPFPATRKANNNLSTLPGNGGRVS) constitute a chloroplast transit peptide.

The protein belongs to the RuBisCO small chain family. Heterohexadecamer of 8 large and 8 small subunits.

The protein resides in the plastid. It is found in the chloroplast. In terms of biological role, ruBisCO catalyzes two reactions: the carboxylation of D-ribulose 1,5-bisphosphate, the primary event in carbon dioxide fixation, as well as the oxidative fragmentation of the pentose substrate. Both reactions occur simultaneously and in competition at the same active site. Although the small subunit is not catalytic it is essential for maximal activity. The chain is Ribulose bisphosphate carboxylase small subunit, chloroplastic 3 from Lemna gibba (Swollen duckweed).